Reading from the N-terminus, the 198-residue chain is Pyridoxal 5'-phosphate synthase subunit PdxT (198 aa).

L-glutamine is bound at residue 52–54; sequence GES. The Nucleophile role is filled by C84. L-glutamine is bound by residues R116 and 143–144; that span reads IR. Active-site charge relay system residues include H179 and E181.

This sequence belongs to the glutaminase PdxT/SNO family. In the presence of PdxS, forms a dodecamer of heterodimers. Only shows activity in the heterodimer.

The enzyme catalyses aldehydo-D-ribose 5-phosphate + D-glyceraldehyde 3-phosphate + L-glutamine = pyridoxal 5'-phosphate + L-glutamate + phosphate + 3 H2O + H(+). It catalyses the reaction L-glutamine + H2O = L-glutamate + NH4(+). Its pathway is cofactor biosynthesis; pyridoxal 5'-phosphate biosynthesis. In terms of biological role, catalyzes the hydrolysis of glutamine to glutamate and ammonia as part of the biosynthesis of pyridoxal 5'-phosphate. The resulting ammonia molecule is channeled to the active site of PdxS. The polypeptide is Pyridoxal 5'-phosphate synthase subunit PdxT (Caldivirga maquilingensis (strain ATCC 700844 / DSM 13496 / JCM 10307 / IC-167)).